Reading from the N-terminus, the 364-residue chain is Developmentally-regulated GTP-binding protein 2 homolog (364 aa).

Residues alanine 63–asparagine 288 form the OBG-type G domain. Residues glycine 69–serine 76, aspartate 115–isoleucine 119, and asparagine 246–aspartate 249 each bind GTP. The 76-residue stretch at asparagine 288–lysine 363 folds into the TGS domain.

Belongs to the TRAFAC class OBG-HflX-like GTPase superfamily. OBG GTPase family.

This chain is Developmentally-regulated GTP-binding protein 2 homolog (drg2), found in Dictyostelium discoideum (Social amoeba).